We begin with the raw amino-acid sequence, 469 residues long: Calcium-binding mitochondrial carrier protein SCaMC-2-B (469 aa).

The Mitochondrial intermembrane segment spans residues 1 to 189; it reads MLCLCLYVPV…EKNTGMWWRH (189 aa). 3 EF-hand domains span residues 47–80, 78–113, and 114–149; these read SYRKWRKKVVKAGDKDLDGQLDFEEFVHYLRDHE, DHEKKLRLVFKSLDKKNDGHIDSQEIMQSLRDLGVH, and ISEEQAEKILKSMDKNGTMTIDWNEWRDYHLLHPAE. Ca(2+) is bound by residues aspartate 60, aspartate 62, aspartate 64, glutamine 66, and glutamate 71. 3 Solcar repeats span residues 184–270, 278–363, and 375–463; these read GMWW…IKRL, LGIL…LKNS, and PGVF…LKIT. A helical transmembrane segment spans residues 190 to 207; it reads LVAGGGAGAVSRTCTAPL. At 208–244 the chain is on the mitochondrial matrix side; sequence DRLKVLMQVHATRSNSMGIAGGFTQMIREGGLRSLWR. Residues 245–264 traverse the membrane as a helical segment; sequence GNGINVLKIAPESAIKFMAY. The Mitochondrial intermembrane segment spans residues 265–287; that stretch reads EQIKRLIGSNQETLGILERLVSG. A helical membrane pass occupies residues 288–301; the sequence is SLAGAIAQSSIYPM. At 302 to 337 the chain is on the mitochondrial matrix side; the sequence is EVLKTRLALGRTGQYSGIADCAKHIFKKEGMTAFYK. The chain crosses the membrane as a helical span at residues 338-357; sequence GYIPNMLGIIPYAGIDLAVY. Residues 358–380 are Mitochondrial intermembrane-facing; the sequence is ETLKNSWLQRFATDSADPGVFVL. The helical transmembrane segment at 381–398 threads the bilayer; it reads LACGTMSSTCGQLASYPL. Residues 399-437 lie on the Mitochondrial matrix side of the membrane; it reads ALVRTRMQAQASQEGSPQMTMSGLFRHIVRTEGAIGLYR. Residues 438–457 traverse the membrane as a helical segment; sequence GLAPNFMKVIPAVSISYVVY. Residues 458-469 are Mitochondrial intermembrane-facing; the sequence is ENLKITLGVQSR.

The protein belongs to the mitochondrial carrier (TC 2.A.29) family.

The protein localises to the mitochondrion inner membrane. Calcium-dependent mitochondrial solute carrier. The polypeptide is Calcium-binding mitochondrial carrier protein SCaMC-2-B (slc25a25b) (Danio rerio (Zebrafish)).